A 303-amino-acid polypeptide reads, in one-letter code: L(+)-tartrate dehydratase subunit alpha (303 aa).

3 residues coordinate iron-sulfur cluster: C71, C190, and C277.

Belongs to the class-I fumarase family. As to quaternary structure, tetramer of two alpha and two beta subunits. It depends on iron-sulfur cluster as a cofactor.

It catalyses the reaction (2R,3R)-tartrate = oxaloacetate + H2O. This Escherichia coli O157:H7 protein is L(+)-tartrate dehydratase subunit alpha (ttdA).